Reading from the N-terminus, the 461-residue chain is Siroheme synthase (461 aa).

The interval 1 to 204 is precorrin-2 dehydrogenase /sirohydrochlorin ferrochelatase; the sequence is MDYFPIFCQL…GDTTQAQQQV (204 aa). Residues 22–23 and 43–44 contribute to the NAD(+) site; these read EV and GR. Ser128 bears the Phosphoserine mark. A uroporphyrinogen-III C-methyltransferase region spans residues 216-461; sequence GEVTLVGAGP…NWFRCEAASA (246 aa). Pro225 contributes to the S-adenosyl-L-methionine binding site. Asp248 acts as the Proton acceptor in catalysis. The active-site Proton donor is the Lys270. S-adenosyl-L-methionine contacts are provided by residues 301–303, Ile306, 331–332, Met382, and Gly411; these read GGD and TA.

This sequence in the N-terminal section; belongs to the precorrin-2 dehydrogenase / sirohydrochlorin ferrochelatase family. It in the C-terminal section; belongs to the precorrin methyltransferase family.

The enzyme catalyses uroporphyrinogen III + 2 S-adenosyl-L-methionine = precorrin-2 + 2 S-adenosyl-L-homocysteine + H(+). The catalysed reaction is precorrin-2 + NAD(+) = sirohydrochlorin + NADH + 2 H(+). It carries out the reaction siroheme + 2 H(+) = sirohydrochlorin + Fe(2+). It participates in cofactor biosynthesis; adenosylcobalamin biosynthesis; precorrin-2 from uroporphyrinogen III: step 1/1. The protein operates within cofactor biosynthesis; adenosylcobalamin biosynthesis; sirohydrochlorin from precorrin-2: step 1/1. Its pathway is porphyrin-containing compound metabolism; siroheme biosynthesis; precorrin-2 from uroporphyrinogen III: step 1/1. It functions in the pathway porphyrin-containing compound metabolism; siroheme biosynthesis; siroheme from sirohydrochlorin: step 1/1. It participates in porphyrin-containing compound metabolism; siroheme biosynthesis; sirohydrochlorin from precorrin-2: step 1/1. Functionally, multifunctional enzyme that catalyzes the SAM-dependent methylations of uroporphyrinogen III at position C-2 and C-7 to form precorrin-2 via precorrin-1. Then it catalyzes the NAD-dependent ring dehydrogenation of precorrin-2 to yield sirohydrochlorin. Finally, it catalyzes the ferrochelation of sirohydrochlorin to yield siroheme. This is Siroheme synthase from Edwardsiella ictaluri (strain 93-146).